Reading from the N-terminus, the 175-residue chain is Large ribosomal subunit protein uL10 (175 aa).

The protein belongs to the universal ribosomal protein uL10 family. In terms of assembly, part of the ribosomal stalk of the 50S ribosomal subunit. The N-terminus interacts with L11 and the large rRNA to form the base of the stalk. The C-terminus forms an elongated spine to which L12 dimers bind in a sequential fashion forming a multimeric L10(L12)X complex.

In terms of biological role, forms part of the ribosomal stalk, playing a central role in the interaction of the ribosome with GTP-bound translation factors. The sequence is that of Large ribosomal subunit protein uL10 from Synechococcus sp. (strain WH7803).